We begin with the raw amino-acid sequence, 250 residues long: Small ribosomal subunit protein uS2 (250 aa).

The protein belongs to the universal ribosomal protein uS2 family.

This Albidiferax ferrireducens (strain ATCC BAA-621 / DSM 15236 / T118) (Rhodoferax ferrireducens) protein is Small ribosomal subunit protein uS2.